The primary structure comprises 75 residues: Small ribosomal subunit protein bS16c (75 aa).

This sequence belongs to the bacterial ribosomal protein bS16 family.

The protein resides in the plastid. It is found in the chloroplast. This is Small ribosomal subunit protein bS16c from Cyanidioschyzon merolae (strain NIES-3377 / 10D) (Unicellular red alga).